Consider the following 269-residue polypeptide: Tryptophan synthase alpha chain (269 aa).

Catalysis depends on proton acceptor residues Glu-49 and Asp-60.

It belongs to the TrpA family. As to quaternary structure, tetramer of two alpha and two beta chains.

It carries out the reaction (1S,2R)-1-C-(indol-3-yl)glycerol 3-phosphate + L-serine = D-glyceraldehyde 3-phosphate + L-tryptophan + H2O. Its pathway is amino-acid biosynthesis; L-tryptophan biosynthesis; L-tryptophan from chorismate: step 5/5. In terms of biological role, the alpha subunit is responsible for the aldol cleavage of indoleglycerol phosphate to indole and glyceraldehyde 3-phosphate. This chain is Tryptophan synthase alpha chain, found in Buchnera aphidicola subsp. Acyrthosiphon pisum (strain APS) (Acyrthosiphon pisum symbiotic bacterium).